A 400-amino-acid polypeptide reads, in one-letter code: WW domain-containing transcription regulator protein 1 (400 aa).

Lys-46 participates in a covalent cross-link: Glycyl lysine isopeptide (Lys-Gly) (interchain with G-Cter in ubiquitin). The disordered stretch occupies residues 52-117 (FFKEPDSGSH…QQHAHLRQQS (66 aa)). Over residues 61–70 (HSRQSSTDSS) the composition is skewed to polar residues. Phosphoserine is present on residues Ser-62 and Ser-89. The segment covering 91-110 (PASLQLGPGAGAAGSPAQQH) has biased composition (low complexity). Residues 124-157 (LPLPPGWEMTFTATGQRYFLNHIEKITTWQDPRK) enclose the WW domain. The segment covering 192 to 211 (NHQHQQQMAPTNLSQQNHPT) has biased composition (polar residues). A disordered region spans residues 192–216 (NHQHQQQMAPTNLSQQNHPTQNPPA). The segment at 222-400 (PNALTTQQQQ…NKSEPFLTWL (179 aa)) is required for interaction with PALS1. Residues Ser-295 and Ser-311 each carry the phosphoserine modification. Positions 394 to 400 (EPFLTWL) match the PDZ-binding motif.

As to quaternary structure, binds to SLC9A3R2 via the PDZ motif at the plasma membrane. Binds to YWHAZ in vivo and in vitro through the phosphoserine-binding motif RSHSSP. Interacts (via coiled-coil domain) with SMAD2 (via MH1 domain), SMAD3 and SMAD4. Interacts with MED15. Interacts with PAX8 and NKX2-1. Interacts with TEAD1, TEAD2, TEAD3 and TEAD4. Interacts (via WW domain) with PALS1. Interacts with LATS1. Interacts with YAP1 (when phosphorylated at 'Ser-112'). Interacts (via WW domain) with PRRG4 (via cytoplasmic domain). Interacts (via WW domain) with AMOTL2 (via PPXY motif); the interaction promotes WWTR1/TAZ localization to the cytoplasm and tight junctions, thereby inhibiting its transcriptional coactivator properties. Interacts (via WW domain) with AMOT; the interaction facilitates translocation of WWTR1/TAZ to the cytoplasm. In terms of processing, phosphorylated by LATS2 and STK3/MST2. Phosphorylation by LATS2 results in creation of 14-3-3 binding sites, retention in the cytoplasm, and functional inactivation. Phosphorylation results in the inhibition of transcriptional coactivation through YWHAZ-mediated nuclear export. Ubiquitinated at Lys-46; leading to proteasomal degradation. Deubiquitinated and stabilized by UCHL1 at Lys-46; leading to inhibition of osteoclastogenesis.

The protein resides in the cytoplasm. It localises to the nucleus. It is found in the cell membrane. The protein localises to the cell junction. Its subcellular location is the tight junction. Transcriptional coactivator which acts as a downstream regulatory target in the Hippo signaling pathway that plays a pivotal role in organ size control and tumor suppression by restricting proliferation and promoting apoptosis. The core of this pathway is composed of a kinase cascade wherein STK3/MST2 and STK4/MST1, in complex with its regulatory protein SAV1, phosphorylates and activates LATS1/2 in complex with its regulatory protein MOB1, which in turn phosphorylates and inactivates YAP1 oncoprotein and WWTR1/TAZ. WWTR1 enhances PAX8 and NKX2-1/TTF1-dependent gene activation. In conjunction with YAP1, involved in the regulation of TGFB1-dependent SMAD2 and SMAD3 nuclear accumulation. Plays a key role in coupling SMADs to the transcriptional machinery such as the mediator complex. Regulates embryonic stem-cell self-renewal, promotes cell proliferation and epithelial-mesenchymal transition. The polypeptide is WW domain-containing transcription regulator protein 1 (Canis lupus familiaris (Dog)).